We begin with the raw amino-acid sequence, 148 residues long: uncharacterized protein (148 aa).

The tract at residues 55-148 is disordered; sequence KMRCGESGAG…RNQGQLYPQP (94 aa). Polar residues predominate over residues 68 to 104; that stretch reads RSNSAEVSSSQPALASKSQSKWGPTSNNPRGALTTTE.

This is an uncharacterized protein from Homo sapiens (Human).